A 319-amino-acid polypeptide reads, in one-letter code: D-alanine--D-alanine ligase B (319 aa).

Residues 117 to 312 (KRVWLSLGLP…FQQLVLAILA (196 aa)) enclose the ATP-grasp domain. 143 to 198 (AQRLGFPLIVKPAHEGSSIGMAKVGGLDELIAAWREAARYDSQVLVEQWISGPEFT) provides a ligand contact to ATP. The Mg(2+) site is built by Asp266, Glu279, and Asn281.

The protein belongs to the D-alanine--D-alanine ligase family. The cofactor is Mg(2+). Mn(2+) serves as cofactor.

It localises to the cytoplasm. The enzyme catalyses 2 D-alanine + ATP = D-alanyl-D-alanine + ADP + phosphate + H(+). It participates in cell wall biogenesis; peptidoglycan biosynthesis. In terms of biological role, cell wall formation. The polypeptide is D-alanine--D-alanine ligase B (Pseudomonas aeruginosa (strain ATCC 15692 / DSM 22644 / CIP 104116 / JCM 14847 / LMG 12228 / 1C / PRS 101 / PAO1)).